A 198-amino-acid polypeptide reads, in one-letter code: Small ribosomal subunit protein uS4c (198 aa).

Residues leucine 85 to cysteine 145 form the S4 RNA-binding domain.

The protein belongs to the universal ribosomal protein uS4 family. In terms of assembly, part of the 30S ribosomal subunit.

The protein resides in the plastid. The protein localises to the apicoplast. Functionally, one of the primary rRNA binding proteins, it binds directly to 16S rRNA where it nucleates assembly of the body of the 30S subunit. In Toxoplasma gondii, this protein is Small ribosomal subunit protein uS4c (rps4).